Consider the following 206-residue polypeptide: Shieldin complex subunit 1 (206 aa).

Positions 27 to 94 are disordered; the sequence is SSYEASQRVS…GQLETNEEED (68 aa). Positions 32 to 55 are enriched in low complexity; that stretch reads SQRVSQGSSNSLSSLESHPFLSSS. Polar residues predominate over residues 56 to 74; that stretch reads TTDPDSNSLNTEQKGSWDS.

In terms of assembly, component of the shieldin complex, consisting of SHLD1, SHLD2, SHLD3 and MAD2L2/REV7. Within the complex, SHLD2 forms a scaffold which interacts with a SHLD3-MAD2L2 subcomplex via its N-terminus, and with SHLD1 via its C-terminus. Interacts with ASTE1.

Its subcellular location is the chromosome. In terms of biological role, component of the shieldin complex, which plays an important role in repair of DNA double-stranded breaks (DSBs). During G1 and S phase of the cell cycle, the complex functions downstream of TP53BP1 to promote non-homologous end joining (NHEJ) and suppress DNA end resection. Mediates various NHEJ-dependent processes including immunoglobulin class-switch recombination, and fusion of unprotected telomeres. The polypeptide is Shieldin complex subunit 1 (Mus musculus (Mouse)).